We begin with the raw amino-acid sequence, 354 residues long: NADH-quinone oxidoreductase subunit H (354 aa).

8 consecutive transmembrane segments (helical) span residues 16–36, 90–110, 126–146, 170–190, 197–217, 249–269, 290–310, and 329–349; these read WLAV…PVMI, YLFI…WAVI, VLYV…SGWA, MGFA…TGIV, IWNW…ISGL, VFFL…AIMF, VPGF…FLWF, and VLIP…YFKV.

It belongs to the complex I subunit 1 family. NDH-1 is composed of 14 different subunits. Subunits NuoA, H, J, K, L, M, N constitute the membrane sector of the complex.

The protein localises to the cell inner membrane. It carries out the reaction a quinone + NADH + 5 H(+)(in) = a quinol + NAD(+) + 4 H(+)(out). In terms of biological role, NDH-1 shuttles electrons from NADH, via FMN and iron-sulfur (Fe-S) centers, to quinones in the respiratory chain. The immediate electron acceptor for the enzyme in this species is believed to be ubiquinone. Couples the redox reaction to proton translocation (for every two electrons transferred, four hydrogen ions are translocated across the cytoplasmic membrane), and thus conserves the redox energy in a proton gradient. This subunit may bind ubiquinone. The sequence is that of NADH-quinone oxidoreductase subunit H from Hydrogenovibrio crunogenus (strain DSM 25203 / XCL-2) (Thiomicrospira crunogena).